The chain runs to 269 residues: Tetrahydromethanopterin S-methyltransferase subunit C (269 aa).

The next 8 helical transmembrane spans lie at 18–38 (VLVI…FVPS), 39–59 (LAML…ANTT), 62–82 (VAAY…LGMG), 84–104 (ISAL…ALPF), 106–126 (LVLA…FIVG), 152–172 (ALAI…DLII), 180–200 (IIAL…NACI), and 222–242 (LVFS…VFWI).

The protein belongs to the MtrC family. As to quaternary structure, the complex is composed of 8 subunits; MtrA, MtrB, MtrC, MtrD, MtrE, MtrF, MtrG and MtrH.

Its subcellular location is the cell membrane. The catalysed reaction is 5-methyl-5,6,7,8-tetrahydromethanopterin + coenzyme M + 2 Na(+)(in) = 5,6,7,8-tetrahydromethanopterin + methyl-coenzyme M + 2 Na(+)(out). Its pathway is one-carbon metabolism; methanogenesis from CO(2); methyl-coenzyme M from 5,10-methylene-5,6,7,8-tetrahydromethanopterin: step 2/2. Its function is as follows. Part of a complex that catalyzes the formation of methyl-coenzyme M and tetrahydromethanopterin from coenzyme M and methyl-tetrahydromethanopterin. This is an energy-conserving, sodium-ion translocating step. The sequence is that of Tetrahydromethanopterin S-methyltransferase subunit C from Methanococcus vannielii (strain ATCC 35089 / DSM 1224 / JCM 13029 / OCM 148 / SB).